Reading from the N-terminus, the 937-residue chain is Alanine--tRNA ligase (937 aa).

Positions 626, 630, 727, and 731 each coordinate Zn(2+).

Belongs to the class-II aminoacyl-tRNA synthetase family. Zn(2+) serves as cofactor.

Its subcellular location is the cytoplasm. The catalysed reaction is tRNA(Ala) + L-alanine + ATP = L-alanyl-tRNA(Ala) + AMP + diphosphate. Catalyzes the attachment of alanine to tRNA(Ala) in a two-step reaction: alanine is first activated by ATP to form Ala-AMP and then transferred to the acceptor end of tRNA(Ala). Also edits incorrectly charged Ser-tRNA(Ala) and Gly-tRNA(Ala) via its editing domain. In Opitutus terrae (strain DSM 11246 / JCM 15787 / PB90-1), this protein is Alanine--tRNA ligase.